A 505-amino-acid chain; its full sequence is Midnolin (505 aa).

The 75-residue stretch at 32–106 (MSLAIHSTTG…LTLVPTVEAG (75 aa)) folds into the Ubiquitin-like domain. Disordered regions lie at residues 155 to 176 (PWHRQGPQSPERGGERPQVSDF), 228 to 305 (SIAT…SRKP), and 440 to 485 (RLRR…GLDF). Low complexity predominate over residues 238–262 (RPVSSAARVPPVSSSPSSPVSPSPV). The span at 263–282 (TAGTFQSHAASTTCPEQTDC) shows a compositional bias: polar residues. A compositionally biased stretch (low complexity) spans 283–300 (SPPASSNTTSTPGSSPTP).

Interacts with GCK; the interaction occurs preferentially at low glucose levels. Interacts with the proteasome.

It localises to the nucleus. Its subcellular location is the cytoplasm. It is found in the cytosol. The protein localises to the nucleolus. Its function is as follows. Facilitates the ubiquitin-independent proteasomal degradation of stimulus-induced transcription factors such as FOSB, EGR1, NR4A1, and IRF4 to the proteasome for degradation. Promotes also the degradation of other substrates such as CBX4. Plays a role in inhibiting the activity of glucokinase GCK and both glucose-induced and basal insulin secretion. The protein is Midnolin of Rattus norvegicus (Rat).